Consider the following 302-residue polypeptide: Glycine--tRNA ligase alpha subunit (302 aa).

It belongs to the class-II aminoacyl-tRNA synthetase family. As to quaternary structure, tetramer of two alpha and two beta subunits.

It is found in the cytoplasm. The catalysed reaction is tRNA(Gly) + glycine + ATP = glycyl-tRNA(Gly) + AMP + diphosphate. The polypeptide is Glycine--tRNA ligase alpha subunit (Xanthomonas oryzae pv. oryzae (strain MAFF 311018)).